The following is a 1154-amino-acid chain: MPGGGPEMDDYMETLKDEEDALWENVECNRHMLSRYINPAKLTPYLRQCKVIDEQDEDEVLNAPMLPSKINRAGRLLDILHTKGQRGYVVFLESLEFYYPELYKLVTGKEPTRRFSTIVVEEGHEGLTHFLMNEVIKLQQQMKAKDLQRCELLARLRQLEDEKKQMTLTRVELLTFQERYYKMKEERDSYNDELVKVKDDNYNLAMRYAQLSEEKNMAVMRSRDLQLEIDQLKHRLNKMEEECKLERNQSLKLKNDIENRPKKEQVLELERENEMLKTKNQELQSIIQAGKRSLPDSDKAILDILEHDRKEALEDRQELVNRIYNLQEEARQAEELRDKYLEEKEDLELKCSTLGKDCEMYKHRMNTVMLQLEEVERERDQAFHSRDEAQTQYSQCLIEKDKYRKQIRELEEKNDEMRIEMVRREACIVNLESKLRRLSKDSNNLDQSLPRNLPVTIISQDFGDASPRTNGQEADDSSTSEESPEDSKYFLPYHPPQRRMNLKGIQLQRAKSPISLKRTSDFQAKGHEEEGTDASPSSCGSLPITNSFTKMQPPRSRSSIMSITAEPPGNDSIVRRYKEDAPHRSTVEEDNDSGGFDALDLDDDSHERYSFGPSSIHSSSSSHQSEGLDAYDLEQVNLMFRKFSLERPFRPSVTSVGHVRGPGPSVQHTTLNGDSLTSQLTLLGGNARGSFVHSVKPGSLAEKAGLREGHQLLLLEGCIRGERQSVPLDTCTKEEAHWTIQRCSGPVTLHYKVNHEGYRKLVKDMEDGLITSGDSFYIRLNLNISSQLDACTMSLKCDDVVHVRDTMYQDRHEWLCARVDPFTDHDLDMGTIPSYSRAQQLLLVKLQRLMHRGSREEVDGTHHTLRALRNTLQPEEALSTSDPRVSPRLSRASFLFGQLLQFVSRSENKYKRMNSNERVRIISGSPLGSLARSSLDATKLLTEKQEELDPESELGKNLSLIPYSLVRAFYCERRRPVLFTPTVLAKTLVQRLLNSGGAMEFTICKSDIVTRDEFLRRQKTETIIYSREKNPNAFECIAPANIEAVAAKNKHCLLEAGIGCTRDLIKSNIYPIVLFIRVCEKNIKRFRKLLPRPETEEEFLRVCRLKEKELEALPCLYATVEPDMWGSVEELLRVVKDKIGEEQRKTIWVDEDQL.

The 93-residue stretch at 18-110 folds into the CARD domain; the sequence is EEDALWENVE…ELYKLVTGKE (93 aa). The interval 111 to 128 is linker; that stretch reads PTRRFSTIVVEEGHEGLT. Positions 130 to 449 form a coiled coil; that stretch reads FLMNEVIKLQ…KDSNNLDQSL (320 aa). Phosphoserine occurs at positions 448 and 466. The interval 450–666 is inhibitory domain (ID); that stretch reads PRNLPVTIIS…GHVRGPGPSV (217 aa). The tract at residues 460–626 is disordered; it reads QDFGDASPRT…HSSSSSHQSE (167 aa). Residues 473–484 are compositionally biased toward acidic residues; it reads EADDSSTSEESP. S512 carries the phosphoserine modification. A compositionally biased stretch (basic and acidic residues) spans 518–529; that stretch reads RTSDFQAKGHEE. A compositionally biased stretch (polar residues) spans 534–562; the sequence is ASPSSCGSLPITNSFTKMQPPRSRSSIMS. S535 bears the Phosphoserine mark. S559 is modified (phosphoserine; by PKC/PRKCB and PKC/PRKCQ). The span at 573 to 587 shows a compositional bias: basic and acidic residues; that stretch reads IVRRYKEDAPHRSTV. A Phosphoserine modification is found at S593. Over residues 614–625 the composition is skewed to low complexity; the sequence is SSIHSSSSSHQS. S644 and S652 each carry phosphoserine; by PKC/PRKCB and PKC/PRKCQ. Residues 667–755 form the PDZ domain; the sequence is QHTTLNGDSL…PVTLHYKVNH (89 aa). Phosphoserine is present on residues S886 and S925. The Guanylate kinase-like domain occupies 973–1140; it reads RRRPVLFTPT…LLRVVKDKIG (168 aa).

As to quaternary structure, homodimer; disulfide-linked. Homomultimer; polymerizes following activation, forming a nucleating helical template that seeds BCL10-filament formation via a CARD-CARD interaction. Interacts (via CARD domain) with BCL10 (via CARD domain); interaction takes place following CARD11 activation and polymerization, leading to the formation of a filamentous CBM complex assembly. Component of a CBM complex (CARD11-BCL10-MALT1) complex involved in NF-kappa-B activation. Found in a membrane raft complex, at least composed of BCL10, CARD11, DPP4 and IKBKB. Interacts (via PDZ domain) with DPP4 (via cytoplasmic tail). Phosphorylation at Ser-559, Ser-644 and Ser-652 by PRKCB and PRKCQ leads to a shift from an inactive to an active form that activates the NF-kappa-B signaling. In terms of tissue distribution, detected in adult peripheral blood leukocytes, thymus, spleen and liver. Also found in promyelocytic leukemia HL-60 cells, chronic myelogenous leukemia K-562 cells, Burkitt's lymphoma Raji cells and colorectal adenocarcinoma SW480 cells. Not detected in HeLaS3, MOLT-4, A-549 and G431 cells.

It localises to the cytoplasm. It is found in the membrane raft. With respect to regulation, maintained in an autoinhibited state via homodimerization in which the CARD domain forms an extensive interaction with the adjacent linker and coiled-coil regions. Activation downstream of T-cell receptor (TCR) by phosphorylation by PRKCB and PRKCQ triggers CARD11 homooligomerization and BCL10 recruitment, followed by activation of NF-kappa-B. Its function is as follows. Adapter protein that plays a key role in adaptive immune response by transducing the activation of NF-kappa-B downstream of T-cell receptor (TCR) and B-cell receptor (BCR) engagement. Transduces signals downstream TCR or BCR activation via the formation of a multiprotein complex together with BCL10 and MALT1 that induces NF-kappa-B and MAP kinase p38 (MAPK11, MAPK12, MAPK13 and/or MAPK14) pathways. Upon activation in response to TCR or BCR triggering, CARD11 homooligomerizes to form a nucleating helical template that recruits BCL10 via CARD-CARD interaction, thereby promoting polymerization of BCL10 and subsequent recruitment of MALT1: this leads to I-kappa-B kinase (IKK) phosphorylation and degradation, and release of NF-kappa-B proteins for nuclear translocation. Its binding to DPP4 induces T-cell proliferation and NF-kappa-B activation in a T-cell receptor/CD3-dependent manner. Promotes linear ubiquitination of BCL10 by promoting the targeting of BCL10 to RNF31/HOIP. Stimulates the phosphorylation of BCL10. Also activates the TORC1 signaling pathway. The chain is Caspase recruitment domain-containing protein 11 from Homo sapiens (Human).